The chain runs to 276 residues: MSSLASPGRIARVFAALHARREVAFIPFITAGDPDLETTAEALLTLDRNGADLLELGLPYSDPLADGPTIQAAATRALARGTTPGAVLDLVARLTPELRAPLIVFTYFNLILAVGIEAFVERLAASGASGLLVPDLPVEEGDALQTAANVQGLDVIWLVAPTSPPERLRRIAERTTGFVYLVSTTGVTGARTQVASSVRTSLAQLRALTTRPVAVGFGISTPEQAHEVASLGADGVIVGSACVQLLATAAPEERLGQLAEFCRQLKKASQTLPVKS.

Catalysis depends on proton acceptor residues Glu-55 and Asp-66.

The protein belongs to the TrpA family. In terms of assembly, tetramer of two alpha and two beta chains.

The catalysed reaction is (1S,2R)-1-C-(indol-3-yl)glycerol 3-phosphate + L-serine = D-glyceraldehyde 3-phosphate + L-tryptophan + H2O. It participates in amino-acid biosynthesis; L-tryptophan biosynthesis; L-tryptophan from chorismate: step 5/5. Functionally, the alpha subunit is responsible for the aldol cleavage of indoleglycerol phosphate to indole and glyceraldehyde 3-phosphate. This chain is Tryptophan synthase alpha chain, found in Gloeobacter violaceus (strain ATCC 29082 / PCC 7421).